The chain runs to 287 residues: GDT1-like protein C17G8.08c (287 aa).

The next 7 helical transmembrane spans lie at 7 to 27, 50 to 70, 89 to 109, 112 to 132, 194 to 214, 232 to 252, and 267 to 287; these read WAII…GEGM, LIFS…FIVA, ALFI…LLFP, LTDI…LMEA, VMAT…FVSE, VYGV…LAVI, and MFIG…QGFF.

It belongs to the GDT1 family.

It localises to the membrane. The sequence is that of GDT1-like protein C17G8.08c from Schizosaccharomyces pombe (strain 972 / ATCC 24843) (Fission yeast).